The following is a 165-amino-acid chain: Anaerobic nitrite reductase GLB1 (165 aa).

One can recognise a Globin domain in the interval 12–162 (VFGEEQEALV…LVAAIKREMK (151 aa)). The Homodimerization signature appears at 45 to 49 (EIAPS). Heme b contacts are provided by serine 55, lysine 69, histidine 73, arginine 103, threonine 107, and histidine 108. Positions 115 to 127 (DGHFEVTGFALLE) match the Homodimerization motif.

The protein belongs to the plant globin family. In terms of assembly, homodimer. Heme b is required as a cofactor. As to expression, in embryonic organs and at low levels in vegetative organs.

It is found in the cytoplasm. Its subcellular location is the nucleus. The catalysed reaction is Fe(III)-heme b-[protein] + nitric oxide + H2O = Fe(II)-heme b-[protein] + nitrite + 2 H(+). Phytoglobin that reduces nitrite to nitric oxide (NO) under anoxic conditions (e.g. during flooding or in waterlogged soil). May not function as an oxygen storage or transport protein. Has an unusually high affinity for O(2) through an hexacoordinate heme iron because of a very low dissociation constant. In Zea mays (Maize), this protein is Anaerobic nitrite reductase GLB1 (HB).